Consider the following 327-residue polypeptide: MENVFDYEDIQLIPAKCIVNSRSECDTTVTLGKHKFKLPVVPANMQTIIDERIATYLAENNYFYIMHRFQPEKRISFIRDMQSRGLIASISVGVKEDEYEFVQQLAAEHLTPEYITIDIAHGHSNAVINMIQHIKKHLPESFVIAGNVGTPEAVRELENAGADATKVGIGPGKVCITKIKTGFGTGGWQLAALRWCAKAASKPIIADGGIRTNGDVAKSIRFGATMVMIGSLFAGHEESPGETIEKDGKLYKEYFGSASEFQKGEKKNVEGKKMFVEHKGSLEDTLIEMEQDLQSSISYAGGTKLDSIRTVDYVVVKNSIFNGDKVY.

The active-site Thioimidate intermediate is Cys175. Residue 204–227 (IIADGGIRTNGDVAKSIRFGATMV) participates in NADP(+) binding.

Belongs to the IMPDH/GMPR family. GuaC type 2 subfamily.

It catalyses the reaction IMP + NH4(+) + NADP(+) = GMP + NADPH + 2 H(+). Catalyzes the irreversible NADPH-dependent deamination of GMP to IMP. It functions in the conversion of nucleobase, nucleoside and nucleotide derivatives of G to A nucleotides, and in maintaining the intracellular balance of A and G nucleotides. The sequence is that of GMP reductase from Bacillus cereus (strain ZK / E33L).